The chain runs to 407 residues: E3 ubiquitin-protein ligase TRIM13 (407 aa).

An RING-type zinc finger spans residues 10 to 58 (CPICCSLFDDPRVLPCSHNFCKKCLEGLLEGNVRNSLWRPSPFKCPTCR). Residues 89-131 (PKMPVCKEHLGQPLNIFCVTDMQLICGVCATRGSHTKHVFSSI) form a B box-type zinc finger. Zn(2+)-binding residues include Cys94, His97, Cys117, and His123. Positions 172 to 200 (LQLLTKDSDKVKEFFEKLQHTLDQKKNEI) form a coiled coil. The chain crosses the membrane as a helical span at residues 316-336 (LLLMAVVLLGLLVFFGPTVFL).

As to quaternary structure, interacts (via C-terminal domain) with VCP. Interacts with AKT1; the interaction ubiquitinates AKT1 and leads to its proteasomal degradation. Interacts with MDM2; the interaction ubiquitinates AKT1 and leads to its proteasomal degradation. Interacts with p62/SQSTM1. Interacts with TRAF6. Interacts with IKBKG/NEMO. Auto-ubiquitinated; requires the RING-type zinc finger. Auto-polyubiquitination leads to proteasomal degradation.

It localises to the endoplasmic reticulum membrane. The catalysed reaction is S-ubiquitinyl-[E2 ubiquitin-conjugating enzyme]-L-cysteine + [acceptor protein]-L-lysine = [E2 ubiquitin-conjugating enzyme]-L-cysteine + N(6)-ubiquitinyl-[acceptor protein]-L-lysine.. It functions in the pathway protein modification; protein ubiquitination. Its function is as follows. Endoplasmic reticulum (ER) membrane anchored E3 ligase involved in the retrotranslocation and turnover of membrane and secretory proteins from the ER through a set of processes named ER-associated degradation (ERAD). This process acts on misfolded proteins as well as in the regulated degradation of correctly folded proteins. Enhances ionizing radiation-induced p53/TP53 stability and apoptosis via ubiquitinating MDM2 and AKT1 and decreasing AKT1 kinase activity through MDM2 and AKT1 proteasomal degradation. Regulates ER stress-induced autophagy, and may act as a tumor suppressor. Also plays a role in innate immune response by stimulating NF-kappa-B activity in the TLR2 signaling pathway. Ubiquitinates TRAF6 via the 'Lys-29'-linked polyubiquitination chain resulting in NF-kappa-B activation. Participates as well in T-cell receptor-mediated NF-kappa-B activation. In the presence of TNF, modulates the IKK complex by regulating IKBKG/NEMO ubiquitination leading to the repression of NF-kappa-B. This is E3 ubiquitin-protein ligase TRIM13 (Trim13) from Rattus norvegicus (Rat).